A 505-amino-acid polypeptide reads, in one-letter code: Lysine--tRNA ligase (505 aa).

Glu-415 and Glu-422 together coordinate Mg(2+).

Belongs to the class-II aminoacyl-tRNA synthetase family. Homodimer. The cofactor is Mg(2+).

The protein localises to the cytoplasm. The catalysed reaction is tRNA(Lys) + L-lysine + ATP = L-lysyl-tRNA(Lys) + AMP + diphosphate. In Xanthomonas axonopodis pv. citri (strain 306), this protein is Lysine--tRNA ligase.